A 729-amino-acid chain; its full sequence is Ran-binding protein 9 (729 aa).

The segment covering 1 to 11 (MSGQPPPPPPQ) has biased composition (pro residues). The segment at 1 to 137 (MSGQPPPPPP…SAAAPFPHGD (137 aa)) is disordered. A compositionally biased stretch (low complexity) spans 27 to 49 (LAPVSGVVLPAPPAVSAGSSPAG). A compositionally biased stretch (gly residues) spans 50–60 (SPGGGAGGEGL). Residues 70-93 (HPPPPPPPATAAPPPPPPPPPPPA) show a composition bias toward pro residues. Residues 107–126 (GLAAGPGPAGGAPTPALVAG) show a composition bias toward low complexity. The B30.2/SPRY domain maps to 147–334 (LQRRLKRLYP…VDANFGQHPF (188 aa)). The LisH domain occupies 365-397 (WQTMIQKMVSSYLVHHGYCATAEAFARSTDQTV). The segment at 401–407 (LASIKNR) is interaction with CALB1. Residues 403 to 460 (SIKNRQRIQKLVLAGRMGEAIETTQQLYPSLLERNPNLLFTLKVRQFIEMVNGTDSEV) enclose the CTLH domain. At lysine 405 the chain carries N6-acetyllysine. A disordered region spans residues 461–489 (RCLGGRSPKSQDSYPVSPRPFSSPSMSPS). Over residues 473–489 (SYPVSPRPFSSPSMSPS) the composition is skewed to low complexity. 2 positions are modified to phosphoserine: serine 477 and serine 487. Residues 615 to 729 (AAIERMIHFG…AFATVEDYLH (115 aa)) are interaction with FMR1.

It belongs to the RANBP9/10 family. As to quaternary structure, part of a complex consisting of RANBP9, MKLN1 and GID8. Identified in the CTLH complex that contains GID4, RANBP9 and/or RANBP10, MKLN1, MAEA, RMND5A (or alternatively its paralog RMND5B), GID8, ARMC8, WDR26 and YPEL5. Within this complex, MAEA, RMND5A (or alternatively its paralog RMND5B), GID8, WDR26, and RANBP9 and/or RANBP10 form the catalytic core, while GID4, MKLN1, ARMC8 and YPEL5 have ancillary roles. Interacts with GTP-bound Ran, AR, CDC2L1/p110C, CALB1, S100A7, USP11, MKLN1, SOS1 or SOS2, GID8, and FMR1. Interacts with the Dyrk kinases HIPK2, DYRK1A, and DYRK1B. Interacts with TP73 isoform Alpha but not with TP53. Interacts with the HGF receptor MET and the integrins ITGB1 and ITGB2, but not with ITGAL. Part of a complex consisting of RANBP9, RAN, DYRK1B and COPS5. Directly interacts with RANBP10. Interacts with YPEL5. Interacts with DDX4. Interacts with NGFR. Interacts with TEX19. Phosphorylated in response to stress. Can be phosphorylated by the cleaved p110 form of CDC2L1 (p110C). In terms of processing, ubiquitinated. Polyubiquitination targets the protein for rapid degradation via the ubiquitin system. Can be deubiquitinated by USP11. As to expression, ubiquitously expressed, with highest levels in testes, placenta, heart, and muscle, and lowest levels in lung. Within the brain, expressed predominantly by neurons in the gray matter of cortex, the granular layer of cerebellum and the Purkinje cells.

It is found in the cytoplasm. It localises to the nucleus. The protein resides in the cell membrane. Functionally, may act as scaffolding protein, and as adapter protein to couple membrane receptors to intracellular signaling pathways. Acts as a mediator of cell spreading and actin cytoskeleton rearrangement. Core component of the CTLH E3 ubiquitin-protein ligase complex that selectively accepts ubiquitin from UBE2H and mediates ubiquitination and subsequent proteasomal degradation of the transcription factor HBP1. May be involved in signaling of ITGB2/LFA-1 and other integrins. Enhances HGF-MET signaling by recruiting Sos and activating the Ras pathway. Enhances dihydrotestosterone-induced transactivation activity of AR, as well as dexamethasone-induced transactivation activity of NR3C1, but not affect estrogen-induced transactivation. Stabilizes TP73 isoform Alpha, probably by inhibiting its ubiquitination, and increases its proapoptotic activity. Inhibits the kinase activity of DYRK1A and DYRK1B. Inhibits FMR1 binding to RNA. This is Ran-binding protein 9 (RANBP9) from Homo sapiens (Human).